We begin with the raw amino-acid sequence, 393 residues long: Elongation factor Tu (393 aa).

In terms of domain architecture, tr-type G spans Lys-10 to Val-203. Residues Gly-19–Thr-26 form a G1 region. Gly-19–Thr-26 provides a ligand contact to GTP. Thr-26 contributes to the Mg(2+) binding site. The tract at residues Gly-60–Ser-64 is G2. Positions Asp-81–Gly-84 are G3. GTP contacts are provided by residues Asp-81–His-85 and Asn-136–Asp-139. Positions Asn-136–Asp-139 are G4. A G5 region spans residues Ser-173 to Leu-175.

This sequence belongs to the TRAFAC class translation factor GTPase superfamily. Classic translation factor GTPase family. EF-Tu/EF-1A subfamily. Monomer.

The protein localises to the cytoplasm. The catalysed reaction is GTP + H2O = GDP + phosphate + H(+). GTP hydrolase that promotes the GTP-dependent binding of aminoacyl-tRNA to the A-site of ribosomes during protein biosynthesis. This Chloroherpeton thalassium (strain ATCC 35110 / GB-78) protein is Elongation factor Tu.